A 214-amino-acid chain; its full sequence is MRTNNMRGKFIVLEGLEGAGKTTAHQIILTQLKQAGIQQIVQTREPGGTPLAEKLRYLIKHEFEEPISPQAELLMLYAARAQLVENVIKPALSAGKWVLGDRHDMSSQAYQGGGRQLDVALLNSLKESVLGPFEPDLTIYLDIDPAIGLARASGCGELDRIEQQSLDFFYRTRERYLALTQHNEKAVIINAEQPLEKVTNDIQQAVQKFLTFAQ.

An ATP-binding site is contributed by 15 to 22; sequence GLEGAGKT.

Belongs to the thymidylate kinase family.

The enzyme catalyses dTMP + ATP = dTDP + ADP. Phosphorylation of dTMP to form dTDP in both de novo and salvage pathways of dTTP synthesis. In Haemophilus ducreyi (strain 35000HP / ATCC 700724), this protein is Thymidylate kinase.